The sequence spans 338 residues: MAASRIAVDAMGGDNAPEAVVEGAIQALHQTEGELSVLLVGPEEQLHGLLASRPEAPEERLRIVDAPEAIGMGETPSTAVKQKPNSSIHQGLAAHHDDHADAFVSAGNTGAIMAASMFILQRIPGVERPSIAGFFPTLKGSSVVLDIGSNVDCKPAHLLQFARMGTVYARQVLKTDPPSVGLLNIGEEPGKGNEQVKAAHELLRDADDVHFVGNVEGGDLLFYAADIIICDGFVGNALLKFGESMSTVLSDMCQQEMERQGLAPDEQKLVAGVLDEVREGFDPEALGGAPLLGVNGNVLVGHGRSTADVIAQMIHSARTIATENVAHALEEAFQSSSA.

It belongs to the PlsX family. As to quaternary structure, homodimer. Probably interacts with PlsY.

It is found in the cytoplasm. It carries out the reaction a fatty acyl-[ACP] + phosphate = an acyl phosphate + holo-[ACP]. It participates in lipid metabolism; phospholipid metabolism. Functionally, catalyzes the reversible formation of acyl-phosphate (acyl-PO(4)) from acyl-[acyl-carrier-protein] (acyl-ACP). This enzyme utilizes acyl-ACP as fatty acyl donor, but not acyl-CoA. The polypeptide is Phosphate acyltransferase (Salinibacter ruber (strain DSM 13855 / M31)).